We begin with the raw amino-acid sequence, 82 residues long: Small ribosomal subunit protein bS16 (82 aa).

Belongs to the bacterial ribosomal protein bS16 family.

The protein is Small ribosomal subunit protein bS16 of Serratia proteamaculans (strain 568).